The following is a 166-amino-acid chain: Regulatory protein RecX (166 aa).

Belongs to the RecX family.

The protein resides in the cytoplasm. Functionally, modulates RecA activity. In Klebsiella pneumoniae (strain 342), this protein is Regulatory protein RecX.